Here is a 718-residue protein sequence, read N- to C-terminus: Sodium/myo-inositol cotransporter (718 aa).

Residues 1-9 (MRAVLEAAD) are Extracellular-facing. The helical transmembrane segment at 10-29 (IAVVALYFILVMCIGFFAMW) threads the bilayer. Residues 30–38 (KSNRSTVSG) lie on the Cytoplasmic side of the membrane. The chain crosses the membrane as a helical span at residues 39 to 57 (YFLAGRSMTWVAIGASLFV). The Extracellular segment spans residues 58–86 (SNIGSEHFIGLAGSGAASGFAVGAWEFNA). The chain crosses the membrane as a helical span at residues 87 to 110 (LLLLQLLGWVFIPIYIRSGVYTMP). Over 111 to 123 (EYLSKRFGGHRIQ) the chain is Cytoplasmic. Residues 124-144 (VYFAALSLLLYIFTKLSVDLY) form a helical membrane-spanning segment. Over 145–157 (SGALFIQESLGWN) the chain is Extracellular. The helical transmembrane segment at 158–183 (LYVSVILLIGMTALLTVTGGLVAVIY) threads the bilayer. The Cytoplasmic portion of the chain corresponds to 184-186 (TDT). A helical membrane pass occupies residues 187–205 (LQALLMIIGALTLMVISMV). Topologically, residues 206-303 (KIGGFEEVKR…HAKGSTLMAG (98 aa)) are extracellular. A glycan (N-linked (GlcNAc...) asparagine) is linked at Asn-232. A helical membrane pass occupies residues 304 to 324 (FLKLLPMFIIVVPGMISRIVF). Over 325–353 (ADEIACINPEHCMQVCGSRAGCSNIAYPR) the chain is Cytoplasmic. Residues 354–376 (LVMTLVPVGLRGLMMAVMIAALM) traverse the membrane as a helical segment. The Extracellular portion of the chain corresponds to 377-406 (SDLDSIFNSASTIFTLDVYKLIRKSASSRE). The chain crosses the membrane as a helical span at residues 407–430 (LMIVGRIFVAFMVVISIAWVPIIV). At 431–443 (EMQGGQMYLYIQE) the chain is on the cytoplasmic side. The chain crosses the membrane as a helical span at residues 444 to 462 (VADYLTPPVAALFLLAIFW). Residues 463-510 (KRCNEQGAFYGGMAGFVLGAVRLILAFTYRAPECDQPDNRPGFIKDIH) are Extracellular-facing. The chain crosses the membrane as a helical span at residues 511-532 (YMYVATALFWITGLITVIVSLL). The Cytoplasmic segment spans residues 533–695 (TPPPTKDQIR…QMLEETPQVK (163 aa)). 2 positions are modified to phosphoserine: Ser-594 and Ser-632. The chain crosses the membrane as a helical span at residues 696-716 (VILNIGLFAVCSLGIFMFVYF). Residues 717-718 (SL) are Extracellular-facing.

The protein belongs to the sodium:solute symporter (SSF) (TC 2.A.21) family. As to quaternary structure, interacts with KCNQ2 (via the pore module). Interacts with KCNQ1; this interaction is direct. Forms coregulatory complexes with ion channels KCNQ2-KCNQ3 and KCNQ1-KCNE2. As to expression, highly expressed in kidney, placenta, and brain and at a lesser extent in thymus, lung, bladder, and testes. Expressed in the choroid plexus epithelium (at protein level).

The protein localises to the apical cell membrane. The protein resides in the basolateral cell membrane. The catalysed reaction is myo-inositol(out) + 2 Na(+)(out) = myo-inositol(in) + 2 Na(+)(in). It carries out the reaction scyllo-inositol(out) + 2 Na(+)(out) = scyllo-inositol(in) + 2 Na(+)(in). Functionally, electrogenic Na(+)-coupled sugar symporter that actively transports myo-inositol and its stereoisomer scyllo-inositol across the plasma membrane, with a Na(+) to sugar coupling ratio of 2:1. Maintains myo-inositol concentration gradient that defines cell volume and fluid balance during osmotic stress, in particular in the fetoplacental unit and central nervous system. Forms coregulatory complexes with voltage-gated K(+) ion channels, allosterically altering ion selectivity, voltage dependence and gating kinetics of the channel. In turn, K(+) efflux through the channel forms a local electrical gradient that modulates electrogenic Na(+)-coupled myo-inositol influx through the transporter. Associates with KCNQ1-KCNE2 channel in the apical membrane of choroid plexus epithelium and regulates the myo-inositol gradient between blood and cerebrospinal fluid with an impact on neuron excitability. Associates with KCNQ2-KCNQ3 channel altering ion selectivity, increasing Na(+) and Cs(+) permeation relative to K(+) permeation. Provides myo-inositol precursor for biosynthesis of phosphoinositides such as PI(4,5)P2, thus indirectly affecting the activity of phosphoinositide-dependent ion channels and Ca(2+) signaling upon osmotic stress. Its function is as follows. (Microbial infection) Functions as a retroviral receptor for M813 murine leukemia virus (MuLV) entry. This chain is Sodium/myo-inositol cotransporter (Slc5a3), found in Mus musculus (Mouse).